Reading from the N-terminus, the 121-residue chain is Large ribosomal subunit protein uL18 (121 aa).

The protein belongs to the universal ribosomal protein uL18 family. Part of the 50S ribosomal subunit; part of the 5S rRNA/L5/L18/L25 subcomplex. Contacts the 5S and 23S rRNAs.

Its function is as follows. This is one of the proteins that bind and probably mediate the attachment of the 5S RNA into the large ribosomal subunit, where it forms part of the central protuberance. The sequence is that of Large ribosomal subunit protein uL18 from Dehalococcoides mccartyi (strain ATCC BAA-2266 / KCTC 15142 / 195) (Dehalococcoides ethenogenes (strain 195)).